A 231-amino-acid polypeptide reads, in one-letter code: Ureidoacrylate amidohydrolase RutB (231 aa).

Catalysis depends on Asp-25, which acts as the Proton acceptor. Lys-134 is a catalytic residue. Cys-167 (nucleophile) is an active-site residue.

Belongs to the isochorismatase family. RutB subfamily.

It catalyses the reaction (Z)-3-ureidoacrylate + H2O + H(+) = (Z)-3-aminoacrylate + NH4(+) + CO2. The catalysed reaction is (Z)-3-ureidoacrylate + H2O = (Z)-3-aminoacrylate + carbamate + H(+). The enzyme catalyses (Z)-2-methylureidoacrylate + H2O + H(+) = (Z)-2-methylaminoacrylate + NH4(+) + CO2. Hydrolyzes ureidoacrylate to form aminoacrylate and carbamate. The carbamate hydrolyzes spontaneously, thereby releasing one of the nitrogen atoms of the pyrimidine ring as ammonia and one of its carbon atoms as CO2. The protein is Ureidoacrylate amidohydrolase RutB of Escherichia coli O139:H28 (strain E24377A / ETEC).